The chain runs to 198 residues: Recombination protein RecR (198 aa).

The segment at Cys-57 to Cys-72 adopts a C4-type zinc-finger fold. Residues Ser-80–Pro-175 enclose the Toprim domain.

The protein belongs to the RecR family.

Functionally, may play a role in DNA repair. It seems to be involved in an RecBC-independent recombinational process of DNA repair. It may act with RecF and RecO. This Macrococcus caseolyticus (strain JCSC5402) (Macrococcoides caseolyticum) protein is Recombination protein RecR.